The sequence spans 704 residues: Urea-proton symporter DUR3 (704 aa).

15 helical membrane-spanning segments follow: residues 39-59 (YAVILGFGAFFAVFTSFLVWL), 80-100 (VKTGLIASVIVSQWTWAATIL), 115-135 (FWYASGATIQVLLFGVMAIEI), 159-179 (IVFLVFCLATNVVVTAMLLLG), 192-212 (LYAASFLIPLGVVVYTLAGGL), 216-236 (FLASYVHSVIVHVALVVFVFL), 291-311 (SSGGAVFGLINIVGNFGTVFV), 336-356 (LVWFAVPFSLATSLGLGALAL), 388-408 (LTMLFMAVTSAGSSELIAVSS), 435-455 (AVLGFGCFMGILAVVLNKAGV), 461-481 (YLAMGVLIGSAVIPIAFMLLW), 486-506 (AFGAILGATSGCVFGIITWLT), 527-547 (LAGNLVAILTGGLIHAVCSLV), 590-610 (AWIVKWGLVFTILIVVIWPVL), and 622-642 (FWFWAIVAIAWGTIGSIVIIG).

Belongs to the sodium:solute symporter (SSF) (TC 2.A.21) family. Expressed in root rhizodermis, including root hairs and cortex in more basal root zones. Expressed in shoots.

The protein resides in the cell membrane. Functionally, high-affinity urea-proton symporter involved in the active transport of urea across the plasma membrane into root cells. May play an important role in urea uptake by plant cells at low external urea concentrations. The chain is Urea-proton symporter DUR3 (DUR3) from Arabidopsis thaliana (Mouse-ear cress).